The chain runs to 297 residues: ATP phosphoribosyltransferase (297 aa).

It belongs to the ATP phosphoribosyltransferase family.

It is found in the cytoplasm. The catalysed reaction is 1-(5-phospho-beta-D-ribosyl)-ATP + diphosphate = 5-phospho-alpha-D-ribose 1-diphosphate + ATP. Its pathway is amino-acid biosynthesis; L-histidine biosynthesis; L-histidine from 5-phospho-alpha-D-ribose 1-diphosphate: step 1/9. Catalyzes the condensation of ATP and 5-phosphoribose 1-diphosphate to form N'-(5'-phosphoribosyl)-ATP (PR-ATP). Has a crucial role in the pathway because the rate of histidine biosynthesis seems to be controlled primarily by regulation of the enzymatic activity. This chain is ATP phosphoribosyltransferase (HIS1), found in Eremothecium gossypii (strain ATCC 10895 / CBS 109.51 / FGSC 9923 / NRRL Y-1056) (Yeast).